A 161-amino-acid polypeptide reads, in one-letter code: Inner membrane assembly complex subunit 17 (161 aa).

The N-terminal 22 residues, 1-22 (MLNPRPCVPRLLSAVARCHKPY), are a transit peptide targeting the mitochondrion. Residues 23-84 (STSIKSLEDL…QQQQQALKKF (62 aa)) lie on the Mitochondrial matrix side of the membrane. Residues 85–107 (VRPMWIFLLMSSFFYLTGHYIWW) form a helical membrane-spanning segment. The Mitochondrial intermembrane portion of the chain corresponds to 108–161 (KLEYDEREIELHKQVQALRQELDSAIAAKHSGKEPALSGAGAKKPKRWYLAWLW). Residues 109-138 (LEYDEREIELHKQVQALRQELDSAIAAKHS) are a coiled coil.

The protein belongs to the INA17 family. In terms of assembly, component of the inner membrane assembly (INA) complex, composed of INA17 and INA22. Interacts with a subset of F(1)F(0)-ATP synthase subunits of the F(1)-domain and the peripheral stalk.

The protein resides in the mitochondrion inner membrane. Functionally, component of the INA complex (INAC) that promotes the biogenesis of mitochondrial F(1)F(0)-ATP synthase. INAC facilitates the assembly of the peripheral stalk and promotes the assembly of the catalytic F(1)-domain with the membrane-embedded F(0)-domain. The sequence is that of Inner membrane assembly complex subunit 17 from Lachancea thermotolerans (strain ATCC 56472 / CBS 6340 / NRRL Y-8284) (Yeast).